Here is a 321-residue protein sequence, read N- to C-terminus: Dolichyl N-acetyl-alpha-D-glucosaminyl phosphate 3-beta-D-2,3-diacetamido-2,3-dideoxy-beta-D-glucuronosyltransferase (321 aa).

2 consecutive transmembrane segments (helical) span residues phenylalanine 252–isoleucine 272 and leucine 290–phenylalanine 310.

The protein belongs to the glycosyltransferase 2 family.

It is found in the cell membrane. It carries out the reaction an archaeal dolichyl N-acetyl-alpha-D-glucosaminyl phosphate + UDP-2,3-diacetamido-2,3-dideoxy-alpha-D-glucuronate = an archaeal dolichyl 3-O-(2,3-diacetamido-2,3-dideoxy- beta-D-glucuronosyl)-N-acetyl- alpha-D-glucosaminyl phosphate + UDP + H(+). It functions in the pathway cell surface structure biogenesis; S-layer biogenesis. The protein operates within protein modification; protein glycosylation. Functionally, involved in the assembly of an N-linked disaccharide that decorates the S-layer glycoprotein and flagellins. AglC catalyzes the transfer of 2,3-diacetamido-2,3-dideoxy-alpha-D-glucuronic acid (Glc-2,3-diNAcA) from uridine 5'-diphospho 2,3-diacetamido-2,3-dideoxy-alpha-D-glucuronic acid (UDP-Glc-2,3-diNAcA) to the AglK product Dol-P-GlcNAc to yield Dol-P-GlcNAc-Glc-2,3-diNAcA. AglC is specific for the monophosphate-linked Dol-P-GlcNAc. In Methanococcus voltae, this protein is Dolichyl N-acetyl-alpha-D-glucosaminyl phosphate 3-beta-D-2,3-diacetamido-2,3-dideoxy-beta-D-glucuronosyltransferase.